Consider the following 620-residue polypeptide: Carotenoid isomerooxygenase (620 aa).

Residues His211, His267, and His337 each contribute to the Fe cation site. Residues 440-459 (NGKQATAGEESPKRDAKRGR) form a disordered region. The span at 449-459 (ESPKRDAKRGR) shows a compositional bias: basic and acidic residues. His612 provides a ligand contact to Fe cation.

This sequence belongs to the carotenoid oxygenase family. Fe(2+) serves as cofactor. Expression follows organogenesis of the larval Bolwig's organ (BO), which mediates larval photophobic behavior. In the adult, expression is restricted exclusively to the brain. Expressed in both neuronal cells and glia cells. Not active within photoreceptors. Active within neuronal cells within the central nervous system.

It catalyses the reaction all-trans-zeaxanthin + O2 = (3R)-11-cis-3-hydroxyretinal + (3R)-all-trans-3-hydroxyretinal. It participates in cofactor metabolism; retinol metabolism. In terms of biological role, catalyzes the oxidative cleavage at the 15,15'-double bond of carotenoids and the simultaneous all-trans to 11-cis isomerization of one cleavage product. Carotenoids like 11-cis retinal can promote visual pigment biogenesis in the dark. Essential for the biosynthesis of the 3-hydroxyretinal chromophore of rhodopsin from zeaxanthin and for proper photoreceptor development. Also essential for larval light perception. The chain is Carotenoid isomerooxygenase (ninaB) from Drosophila melanogaster (Fruit fly).